The chain runs to 213 residues: Pyrrolidone-carboxylate peptidase (213 aa).

Catalysis depends on residues Glu78, Cys141, and His165.

This sequence belongs to the peptidase C15 family. Homotetramer.

The protein resides in the cytoplasm. The enzyme catalyses Release of an N-terminal pyroglutamyl group from a polypeptide, the second amino acid generally not being Pro.. In terms of biological role, removes 5-oxoproline from various penultimate amino acid residues except L-proline. This Alkaliphilus oremlandii (strain OhILAs) (Clostridium oremlandii (strain OhILAs)) protein is Pyrrolidone-carboxylate peptidase.